Reading from the N-terminus, the 244-residue chain is Thiol S-methyltransferase TMT1B (244 aa).

The first 23 residues, 1–23 (MDALVLFLQLLVLLLTLPLHLLA), serve as a signal peptide directing secretion.

It belongs to the methyltransferase superfamily.

It localises to the endoplasmic reticulum membrane. It is found in the lipid droplet. The protein localises to the microsome. Its subcellular location is the cytoplasm. The protein resides in the cytosol. The catalysed reaction is a thiol + S-adenosyl-L-methionine = a methyl thioether + S-adenosyl-L-homocysteine + H(+). In terms of biological role, thiol S-methyltransferase that catalyzes the transfer of a methyl group from S-adenosyl-L-methionine to alkyl and phenolic thiol-containing acceptor substrates. Together with TMT1B accounts for most of S-thiol methylation activity in the endoplasmic reticulum of hepatocytes. Selectively methylates S-centered nucleophiles from metabolites such as hydrogen sulfide and dithiothreitol. The polypeptide is Thiol S-methyltransferase TMT1B (Mus musculus (Mouse)).